A 176-amino-acid polypeptide reads, in one-letter code: MAKPLMFLPLLVMAGFVGAGYFAMQQNDPNAMPTALAGKEAPAVRLEPLGAEAPFTDADLRDGKIKLVNFWASWCAPCRVEHPNLIGLKQDGIEIMGVNWKDTPDQAQGFLAEMGSPYTRLGADPGNKMGLDWGVAGVPETFVVDGAGRILTRIAGPLTEDVITKKIDPLLAGTAD.

The N-terminal stretch at 1-19 is a signal peptide; the sequence is MAKPLMFLPLLVMAGFVGA. In terms of domain architecture, Thioredoxin spans 35 to 172; it reads ALAGKEAPAV…ITKKIDPLLA (138 aa). Cysteines 75 and 78 form a disulfide.

It belongs to the thioredoxin family. DsbE subfamily.

It localises to the periplasm. Required for disulfide bond formation in some periplasmic proteins. Also acts as a disulfide oxidoreductase in cytochromes c biogenesis. The cysteines of apocytochromes c must be in the reduced state for covalent linkage between the two moieties to occur. The sequence is that of Thiol:disulfide interchange protein HelX (helX) from Rhodobacter capsulatus (strain ATCC BAA-309 / NBRC 16581 / SB1003).